An 88-amino-acid polypeptide reads, in one-letter code: Small ribosomal subunit protein uS15 (88 aa).

It belongs to the universal ribosomal protein uS15 family. As to quaternary structure, part of the 30S ribosomal subunit. Forms a bridge to the 50S subunit in the 70S ribosome, contacting the 23S rRNA.

One of the primary rRNA binding proteins, it binds directly to 16S rRNA where it helps nucleate assembly of the platform of the 30S subunit by binding and bridging several RNA helices of the 16S rRNA. In terms of biological role, forms an intersubunit bridge (bridge B4) with the 23S rRNA of the 50S subunit in the ribosome. This chain is Small ribosomal subunit protein uS15, found in Sorangium cellulosum (strain So ce56) (Polyangium cellulosum (strain So ce56)).